The primary structure comprises 212 residues: Probable dual specificity protein phosphatase DDB_G0269404 (212 aa).

The Tyrosine-protein phosphatase domain maps to 30-169 (FDAQEVIPNL…LINYEATILK (140 aa)). Cys-113 functions as the Phosphocysteine intermediate in the catalytic mechanism.

This sequence belongs to the protein-tyrosine phosphatase family. Non-receptor class dual specificity subfamily.

The catalysed reaction is O-phospho-L-tyrosyl-[protein] + H2O = L-tyrosyl-[protein] + phosphate. It catalyses the reaction O-phospho-L-seryl-[protein] + H2O = L-seryl-[protein] + phosphate. It carries out the reaction O-phospho-L-threonyl-[protein] + H2O = L-threonyl-[protein] + phosphate. Its function is as follows. Has a dual specificity toward Ser/Thr and Tyr-containing proteins. The polypeptide is Probable dual specificity protein phosphatase DDB_G0269404 (Dictyostelium discoideum (Social amoeba)).